The following is a 317-amino-acid chain: Zinc finger protein CRM3 (317 aa).

The span at 1-15 shows a compositional bias: low complexity; it reads MNFSLSKQSSEKQSS. The segment at 1-22 is disordered; the sequence is MNFSLSKQSSEKQSSYTDKSRS. 2 consecutive C2H2-type zinc fingers follow at residues 254 to 276 and 282 to 306; these read KQCP…YLIH and FKCT…LKSH.

It is found in the nucleus. In terms of biological role, probable transcription factor involved in the regulation of the transcription of genes involved in cell rescue and defense, as well as cell cycle and DNA processing. In Saccharomyces cerevisiae (strain ATCC 204508 / S288c) (Baker's yeast), this protein is Zinc finger protein CRM3.